Here is a 121-residue protein sequence, read N- to C-terminus: Large ribosomal subunit protein uL14c (121 aa).

This sequence belongs to the universal ribosomal protein uL14 family. Part of the 50S ribosomal subunit.

It is found in the plastid. Its subcellular location is the apicoplast. In terms of biological role, binds to 23S rRNA. This Toxoplasma gondii protein is Large ribosomal subunit protein uL14c (rpl14).